A 281-amino-acid polypeptide reads, in one-letter code: Nucleotide-binding protein CTN_0898 (281 aa).

Residue G9–T16 coordinates ATP. A GTP-binding site is contributed by D58–S61.

The protein belongs to the RapZ-like family.

In terms of biological role, displays ATPase and GTPase activities. This is Nucleotide-binding protein CTN_0898 from Thermotoga neapolitana (strain ATCC 49049 / DSM 4359 / NBRC 107923 / NS-E).